Here is a 1058-residue protein sequence, read N- to C-terminus: Leucine-rich repeat and coiled-coil domain-containing protein PF3D7_0703800 (1058 aa).

Residues M1 to T10 are compositionally biased toward basic residues. A disordered region spans residues M1–Y34. Residues K11–Y34 show a composition bias toward basic and acidic residues. Residues L515–N544 are a coiled coil. Residues E641–N661 are compositionally biased toward basic and acidic residues. Disordered regions lie at residues E641–V665 and N706–K728. Residues N872–N905 adopt a coiled-coil conformation.

The sequence is that of Leucine-rich repeat and coiled-coil domain-containing protein PF3D7_0703800 from Plasmodium falciparum (isolate 3D7).